We begin with the raw amino-acid sequence, 752 residues long: Maltodextrin phosphorylase (752 aa).

Residue lysine 603 is modified to N6-(pyridoxal phosphate)lysine.

The protein belongs to the glycogen phosphorylase family. Pyridoxal 5'-phosphate is required as a cofactor.

The catalysed reaction is [(1-&gt;4)-alpha-D-glucosyl](n) + phosphate = [(1-&gt;4)-alpha-D-glucosyl](n-1) + alpha-D-glucose 1-phosphate. In terms of biological role, phosphorylase is an important allosteric enzyme in carbohydrate metabolism. Enzymes from different sources differ in their regulatory mechanisms and in their natural substrates. However, all known phosphorylases share catalytic and structural properties. This chain is Maltodextrin phosphorylase (malP), found in Streptococcus pneumoniae serotype 4 (strain ATCC BAA-334 / TIGR4).